Consider the following 136-residue polypeptide: Riboflavin kinase (136 aa).

Glycine 15–arginine 20 is a CDP binding site. Threonine 44 and asparagine 46 together coordinate Mg(2+). The FMN site is built by threonine 103 and glutamate 111. Tyrosine 116–arginine 119 contacts CDP.

Belongs to the archaeal riboflavin kinase family. It depends on Mg(2+) as a cofactor.

It catalyses the reaction riboflavin + CTP = CDP + FMN + H(+). Its pathway is cofactor biosynthesis; FMN biosynthesis; FMN from riboflavin (CTP route): step 1/1. Its function is as follows. Catalyzes the CTP-dependent phosphorylation of riboflavin (vitamin B2) to form flavin mononucleotide (FMN). In Sulfurisphaera tokodaii (strain DSM 16993 / JCM 10545 / NBRC 100140 / 7) (Sulfolobus tokodaii), this protein is Riboflavin kinase.